A 769-amino-acid chain; its full sequence is Endothelin-converting enzyme 1 (769 aa).

At 1 to 67 (MRTVWSPLAA…WAARTSVEKR (67 aa)) the chain is on the cytoplasmic side. Thr-24 carries the post-translational modification Phosphothreonine. A helical; Signal-anchor for type II membrane protein membrane pass occupies residues 68 to 88 (LVVLVTLLAAGLVACLAALGI). Residues 89 to 769 (QYQTRTPPVC…MNPHHKCEVW (681 aa)) lie on the Extracellular side of the membrane. In terms of domain architecture, Peptidase M13 spans 97-769 (VCLTEACVSV…MNPHHKCEVW (673 aa)). Cystine bridges form between Cys-98-Cys-103, Cys-121-Cys-754, Cys-129-Cys-714, Cys-184-Cys-434, and Cys-643-Cys-766. Asn-165, Asn-186, Asn-209, Asn-269, Asn-315, Asn-361, Asn-382, and Asn-538 each carry an N-linked (GlcNAc...) asparagine glycan. His-606 lines the Zn(2+) pocket. Glu-607 is an active-site residue. A Zn(2+)-binding site is contributed by His-610. N-linked (GlcNAc...) asparagine glycans are attached at residues Asn-631 and Asn-650. A Zn(2+)-binding site is contributed by Glu-666. Catalysis depends on Asp-670, which acts as the Proton donor.

Belongs to the peptidase M13 family. In terms of assembly, homodimer; disulfide-linked. Interacts with PPP1R16B. Interacts with TSPAN8; this interaction recruits the endothelin converting enzyme ECE1 to tetraspanin-enriched microdomains and positively modulates its enzymatic activity. The cofactor is Zn(2+).

It is found in the cell membrane. The enzyme catalyses Hydrolysis of the 21-Trp-|-Val-22 bond in big endothelin to form endothelin 1.. Its activity is regulated as follows. Inhibited by phosphoramidon. Functionally, converts big endothelin-1 to endothelin-1. The protein is Endothelin-converting enzyme 1 (Ece1) of Mus musculus (Mouse).